Here is a 289-residue protein sequence, read N- to C-terminus: Mitochondrial fission regulator 1-like (289 aa).

T27 is modified (phosphothreonine). A phosphoserine mark is found at S38, S100, S107, S221, S222, S235, S258, and S270.

This sequence belongs to the MTFR1 family. Post-translationally, phosphorylated by AMPK. Upon stress, phosphorylation by AMPK is sufficient to induce mitochondrial fragmentation.

It localises to the mitochondrion outer membrane. Functionally, mitochondrial protein required for adaptation of miochondrial dynamics to metabolic changes. Regulates mitochondrial morphology at steady state and mediates AMPK-dependent stress-induced mitochondrial fragmentation via the control of OPA1 levels. The sequence is that of Mitochondrial fission regulator 1-like (MTFR1L) from Bos taurus (Bovine).